The primary structure comprises 118 residues: Cell division protein FtsB (118 aa).

The Cytoplasmic segment spans residues Met1–Leu3. A helical membrane pass occupies residues Leu4–Leu21. Residues Gly22–Arg118 are Periplasmic-facing. Positions Lys28–Thr62 form a coiled coil. The tract at residues Leu88–Arg118 is disordered. A compositionally biased stretch (polar residues) spans Pro95–Ala105. Residues Pro109–Arg118 show a composition bias toward pro residues.

This sequence belongs to the FtsB family. In terms of assembly, part of a complex composed of FtsB, FtsL and FtsQ.

The protein localises to the cell inner membrane. Its function is as follows. Essential cell division protein. May link together the upstream cell division proteins, which are predominantly cytoplasmic, with the downstream cell division proteins, which are predominantly periplasmic. The polypeptide is Cell division protein FtsB (Bordetella bronchiseptica (strain ATCC BAA-588 / NCTC 13252 / RB50) (Alcaligenes bronchisepticus)).